A 189-amino-acid chain; its full sequence is GMP synthase [glutamine-hydrolyzing] subunit A (189 aa).

In terms of domain architecture, Glutamine amidotransferase type-1 spans 5–189 (KILVVNNYGQ…TNFLEICEKY (185 aa)). The active-site Nucleophile is Cys79. Residues His166 and Glu168 contribute to the active site.

As to quaternary structure, heterodimer composed of a glutamine amidotransferase subunit (A) and a GMP-binding subunit (B).

It carries out the reaction XMP + L-glutamine + ATP + H2O = GMP + L-glutamate + AMP + diphosphate + 2 H(+). Its pathway is purine metabolism; GMP biosynthesis; GMP from XMP (L-Gln route): step 1/1. In terms of biological role, catalyzes the synthesis of GMP from XMP. The sequence is that of GMP synthase [glutamine-hydrolyzing] subunit A from Methanosarcina barkeri (strain Fusaro / DSM 804).